Reading from the N-terminus, the 141-residue chain is Large ribosomal subunit protein uL11 (141 aa).

Belongs to the universal ribosomal protein uL11 family. As to quaternary structure, part of the ribosomal stalk of the 50S ribosomal subunit. Interacts with L10 and the large rRNA to form the base of the stalk. L10 forms an elongated spine to which L12 dimers bind in a sequential fashion forming a multimeric L10(L12)X complex. One or more lysine residues are methylated.

In terms of biological role, forms part of the ribosomal stalk which helps the ribosome interact with GTP-bound translation factors. The protein is Large ribosomal subunit protein uL11 of Crocosphaera subtropica (strain ATCC 51142 / BH68) (Cyanothece sp. (strain ATCC 51142)).